Here is a 491-residue protein sequence, read N- to C-terminus: Ketol-acid reductoisomerase (NADP(+)) (491 aa).

In terms of domain architecture, KARI N-terminal Rossmann spans 15-208 (AQLGKCRFMG…GGHRAGVLES (194 aa)). Residues 45-48 (CGAQ), R68, R76, S78, and 108-110 (DKQ) each bind NADP(+). H132 is a catalytic residue. G158 serves as a coordination point for NADP(+). 2 consecutive KARI C-terminal knotted domains span residues 209 to 344 (SFVA…TAPQ) and 345 to 484 (FEGK…MTDM). Residues D217, E221, E389, and E393 each contribute to the Mg(2+) site. Position 414 (S414) interacts with substrate.

Belongs to the ketol-acid reductoisomerase family. Mg(2+) is required as a cofactor.

The catalysed reaction is (2R)-2,3-dihydroxy-3-methylbutanoate + NADP(+) = (2S)-2-acetolactate + NADPH + H(+). It carries out the reaction (2R,3R)-2,3-dihydroxy-3-methylpentanoate + NADP(+) = (S)-2-ethyl-2-hydroxy-3-oxobutanoate + NADPH + H(+). It functions in the pathway amino-acid biosynthesis; L-isoleucine biosynthesis; L-isoleucine from 2-oxobutanoate: step 2/4. It participates in amino-acid biosynthesis; L-valine biosynthesis; L-valine from pyruvate: step 2/4. Its function is as follows. Involved in the biosynthesis of branched-chain amino acids (BCAA). Catalyzes an alkyl-migration followed by a ketol-acid reduction of (S)-2-acetolactate (S2AL) to yield (R)-2,3-dihydroxy-isovalerate. In the isomerase reaction, S2AL is rearranged via a Mg-dependent methyl migration to produce 3-hydroxy-3-methyl-2-ketobutyrate (HMKB). In the reductase reaction, this 2-ketoacid undergoes a metal-dependent reduction by NADPH to yield (R)-2,3-dihydroxy-isovalerate. The sequence is that of Ketol-acid reductoisomerase (NADP(+)) from Salmonella schwarzengrund (strain CVM19633).